A 362-amino-acid chain; its full sequence is Aminomethyltransferase (362 aa).

Belongs to the GcvT family. The glycine cleavage system is composed of four proteins: P, T, L and H.

It catalyses the reaction N(6)-[(R)-S(8)-aminomethyldihydrolipoyl]-L-lysyl-[protein] + (6S)-5,6,7,8-tetrahydrofolate = N(6)-[(R)-dihydrolipoyl]-L-lysyl-[protein] + (6R)-5,10-methylene-5,6,7,8-tetrahydrofolate + NH4(+). Its function is as follows. The glycine cleavage system catalyzes the degradation of glycine. This Listeria monocytogenes serotype 4b (strain CLIP80459) protein is Aminomethyltransferase.